The primary structure comprises 550 residues: DNA-directed RNA polymerase subunit alpha (550 aa).

The alpha N-terminal domain (alpha-NTD) stretch occupies residues methionine 1–lysine 333. Residues threonine 185 to asparagine 258 are insert. The segment at phenylalanine 378–phenylalanine 550 is alpha C-terminal domain (alpha-CTD).

Belongs to the RNA polymerase alpha chain family. In plastids the minimal PEP RNA polymerase catalytic core is composed of four subunits: alpha, beta, beta', and beta''. When a (nuclear-encoded) sigma factor is associated with the core the holoenzyme is formed, which can initiate transcription.

The protein resides in the plastid. It localises to the chloroplast. The enzyme catalyses RNA(n) + a ribonucleoside 5'-triphosphate = RNA(n+1) + diphosphate. Its function is as follows. DNA-dependent RNA polymerase catalyzes the transcription of DNA into RNA using the four ribonucleoside triphosphates as substrates. In Chlamydomonas reinhardtii (Chlamydomonas smithii), this protein is DNA-directed RNA polymerase subunit alpha (rpoA).